Reading from the N-terminus, the 109-residue chain is Spermidine export protein MdtI (109 aa).

4 helical membrane-spanning segments follow: residues 6–26, 36–56, 64–84, and 88–108; these read WVHA…NVFL, FYGI…SQAV, AYAL…WVLF, and LNNK…MIKL.

The protein belongs to the drug/metabolite transporter (DMT) superfamily. Small multidrug resistance (SMR) (TC 2.A.7.1) family. MdtI subfamily. In terms of assembly, forms a complex with MdtJ.

The protein localises to the cell inner membrane. Its function is as follows. Catalyzes the excretion of spermidine. This chain is Spermidine export protein MdtI, found in Citrobacter koseri (strain ATCC BAA-895 / CDC 4225-83 / SGSC4696).